The primary structure comprises 578 residues: Interleukin-10 receptor subunit alpha (578 aa).

An N-terminal signal peptide occupies residues 1–21 (MLPCLVVLLAALLSLRLGSDA). The Extracellular segment spans residues 22-235 (HGTELPSPPS…LTRQYFTVTN (214 aa)). N-linked (GlcNAc...) asparagine glycans are attached at residues Asn-50, Asn-74, Asn-110, Asn-154, Asn-177, and Asn-189. Residues Cys-56 and Cys-75 are joined by a disulfide bond. An intrachain disulfide couples Cys-202 to Cys-223. A helical transmembrane segment spans residues 236–256 (VIIFFAFVLLLSGALAYCLAL). Topologically, residues 257 to 578 (QLYVRRRKKL…PLISSLQSSE (322 aa)) are cytoplasmic. A disordered region spans residues 313–436 (LHGSTDSGFG…PPEPEVPGEE (124 aa)). Residues 316–332 (STDSGFGSTKPSLQTEE) are compositionally biased toward polar residues. A BTRC recognition motif motif is present at residues 318–323 (DSGFGS). The segment covering 357 to 371 (GDSCSSGSSNSTDSG) has biased composition (low complexity). Residues 377–396 (PSLSPSTGPTWEQQVGSNSR) are compositionally biased toward polar residues.

The protein belongs to the type II cytokine receptor family. Interacts with IL10. Interacts with IL10RB. Interacts (via its cytoplasmic domain) with JAK1 (via N-terminus). Interacts with BTRC; this interaction leads to IL10RA ubiquitination and subsequent degradation. Interacts with STAT3. In terms of assembly, (Microbial infection) Interacts with human cytomegalovirus protein IL10. As to quaternary structure, (Microbial infection) Interacts with Epstein-Barr virus protein IL10. Phosphorylated. Phosphorylation of the cytoplasmic tail induced STAT3 activation. Post-translationally, ubiquitinated by BTRC; ubiquitination leads to endocytosis and subsequent degradation of IL10RA. In terms of tissue distribution, primarily expressed in hematopoetic cells including B-cells, T-cells, NK cells, monocytes and macrophages. Not expressed in non-hematopoetic cells such as fibroblasts or endothelial cells.

Its subcellular location is the cell membrane. It is found in the cytoplasm. Cell surface receptor for the cytokine IL10 that participates in IL10-mediated anti-inflammatory functions, limiting excessive tissue disruption caused by inflammation. Upon binding to IL10, induces a conformational change in IL10RB, allowing IL10RB to bind IL10 as well. In turn, the heterotetrameric assembly complex, composed of two subunits of IL10RA and IL10RB, activates the kinases JAK1 and TYK2 that are constitutively associated with IL10RA and IL10RB respectively. These kinases then phosphorylate specific tyrosine residues in the intracellular domain in IL10RA leading to the recruitment and subsequent phosphorylation of STAT3. Once phosphorylated, STAT3 homodimerizes, translocates to the nucleus and activates the expression of anti-inflammatory genes. In addition, IL10RA-mediated activation of STAT3 inhibits starvation-induced autophagy. The protein is Interleukin-10 receptor subunit alpha (IL10RA) of Homo sapiens (Human).